Here is a 312-residue protein sequence, read N- to C-terminus: Ribosomal RNA small subunit methyltransferase H (312 aa).

S-adenosyl-L-methionine contacts are provided by residues 35 to 37, D55, F79, D100, and Q107; that span reads GGH. Positions 279–312 are disordered; the sequence is LVGKSQRPGPGEVAANPRSRSAVMRVAERTGGAA.

It belongs to the methyltransferase superfamily. RsmH family.

The protein resides in the cytoplasm. It catalyses the reaction cytidine(1402) in 16S rRNA + S-adenosyl-L-methionine = N(4)-methylcytidine(1402) in 16S rRNA + S-adenosyl-L-homocysteine + H(+). Its function is as follows. Specifically methylates the N4 position of cytidine in position 1402 (C1402) of 16S rRNA. The chain is Ribosomal RNA small subunit methyltransferase H from Aromatoleum aromaticum (strain DSM 19018 / LMG 30748 / EbN1) (Azoarcus sp. (strain EbN1)).